The primary structure comprises 372 residues: MTAEIQQPPSQPPAQSSPMSAATDKHGGQPSAMESASCATKTKKTNAGIRRPEKPPYSYIALIVMAIQSSPTKRLTLSEIYQFLQSRFPFFRGSYQGWKNSVRHNLSLNECFIKLPKGLGRPGKGHYWTIDPASEFMFEEGSFRRRPRGFRRKCQALKPMYSMMNGLGFNHIPDTYSFQGASGTISCPPNSLSLDSGIGMMNGHLPSNVDGMGLSGHSVSHLTANGAHSYMGSCTGASGGDYSHHDSGSPLLGGGVMDPHSVYSSPASAWAPSASTPYIKQQPLSPCNTAANPLSSSLSSHSLDQSYLHQNSHNTASELQGIPRYHSQSPSMNDRKEFVFSFNAMASSSMHSGSGSYYHQQVGYQDIKPCVM.

Residues 1–51 form a disordered region; the sequence is MTAEIQQPPSQPPAQSSPMSAATDKHGGQPSAMESASCATKTKKTNAGIRR. The span at 13-22 shows a compositional bias: low complexity; that stretch reads PAQSSPMSAA. The fork-head DNA-binding region spans 54-148; sequence KPPYSYIALI…EEGSFRRRPR (95 aa).

As to expression, at the late gastrula stage, expressed in the presumptive ventrolateral mesoderm. During neurulation and tailbud stages, expressed in the lateral plate mesoderm and in the neural crest-derived structures of the head and branchial arches. During tailbud stages, expressed in the pronephros and pronephros ducts and in cells that migrate from the dorsolateral plate to the ventral region of the embryo (with the notable exception of the heart). These cells may represent hematopoietic or endothelial progenitor cells.

It is found in the nucleus. In terms of biological role, probable transcription factor. Required for smooth muscle (visceral mesoderm) differentiation during gut development. Also required for normal proliferation of the lateral plate mesoderm. Acts as a downstream mediator of bmp4-signaling. The chain is Forkhead box protein F1-B (foxf1-b) from Xenopus laevis (African clawed frog).